Consider the following 282-residue polypeptide: D-alanine aminotransferase (282 aa).

Tyr32 serves as a coordination point for substrate. A pyridoxal 5'-phosphate-binding site is contributed by Arg51. Substrate contacts are provided by Arg99 and His101. Lys146 serves as the catalytic Proton acceptor. Residue Lys146 is modified to N6-(pyridoxal phosphate)lysine. Glu178 contributes to the pyridoxal 5'-phosphate binding site.

This sequence belongs to the class-IV pyridoxal-phosphate-dependent aminotransferase family. In terms of assembly, homodimer. Pyridoxal 5'-phosphate is required as a cofactor.

It catalyses the reaction D-alanine + 2-oxoglutarate = D-glutamate + pyruvate. Functionally, acts on the D-isomers of alanine, leucine, aspartate, glutamate, aminobutyrate, norvaline and asparagine. The enzyme transfers an amino group from a substrate D-amino acid to the pyridoxal phosphate cofactor to form pyridoxamine and an alpha-keto acid in the first half-reaction. The second half-reaction is the reverse of the first, transferring the amino group from the pyridoxamine to a second alpha-keto acid to form the product D-amino acid via a ping-pong mechanism. This is an important process in the formation of D-alanine and D-glutamate, which are essential bacterial cell wall components. The protein is D-alanine aminotransferase (dat) of Staphylococcus aureus (strain COL).